We begin with the raw amino-acid sequence, 301 residues long: Phosphatidylglycerol--prolipoprotein diacylglyceryl transferase (301 aa).

4 helical membrane passes run 10–30 (IAFS…LASF), 57–77 (LLFY…MLFY), 92–112 (VWEG…AVAW), and 119–139 (LQMF…LGFG). An a 1,2-diacyl-sn-glycero-3-phospho-(1'-sn-glycerol)-binding site is contributed by Arg-140. The next 3 membrane-spanning stretches (helical) occupy residues 202 to 222 (PSQL…LWLF), 230 to 250 (YAVS…VEFV), and 264 to 284 (LTRG…LFWL).

Belongs to the Lgt family.

The protein resides in the cell inner membrane. It catalyses the reaction L-cysteinyl-[prolipoprotein] + a 1,2-diacyl-sn-glycero-3-phospho-(1'-sn-glycerol) = an S-1,2-diacyl-sn-glyceryl-L-cysteinyl-[prolipoprotein] + sn-glycerol 1-phosphate + H(+). Its pathway is protein modification; lipoprotein biosynthesis (diacylglyceryl transfer). Its function is as follows. Catalyzes the transfer of the diacylglyceryl group from phosphatidylglycerol to the sulfhydryl group of the N-terminal cysteine of a prolipoprotein, the first step in the formation of mature lipoproteins. The sequence is that of Phosphatidylglycerol--prolipoprotein diacylglyceryl transferase from Xylella fastidiosa (strain 9a5c).